Reading from the N-terminus, the 523-residue chain is Peptide chain release factor 3 (523 aa).

A tr-type G domain is found at 10-277 (EKRRTFAIIS…SFVDLAPAPE (268 aa)). Residues 19–26 (SHPDAGKT), 87–91 (DTPGH), and 141–144 (NKLD) contribute to the GTP site.

Belongs to the TRAFAC class translation factor GTPase superfamily. Classic translation factor GTPase family. PrfC subfamily.

The protein resides in the cytoplasm. Functionally, increases the formation of ribosomal termination complexes and stimulates activities of RF-1 and RF-2. It binds guanine nucleotides and has strong preference for UGA stop codons. It may interact directly with the ribosome. The stimulation of RF-1 and RF-2 is significantly reduced by GTP and GDP, but not by GMP. This is Peptide chain release factor 3 from Lactobacillus acidophilus (strain ATCC 700396 / NCK56 / N2 / NCFM).